Reading from the N-terminus, the 131-residue chain is Ribonuclease P protein component (131 aa).

It belongs to the RnpA family. Consists of a catalytic RNA component (M1 or rnpB) and a protein subunit.

It carries out the reaction Endonucleolytic cleavage of RNA, removing 5'-extranucleotides from tRNA precursor.. Functionally, RNaseP catalyzes the removal of the 5'-leader sequence from pre-tRNA to produce the mature 5'-terminus. It can also cleave other RNA substrates such as 4.5S RNA. The protein component plays an auxiliary but essential role in vivo by binding to the 5'-leader sequence and broadening the substrate specificity of the ribozyme. This Synechococcus sp. (strain WH7803) protein is Ribonuclease P protein component.